The sequence spans 143 residues: Small ribosomal subunit protein uS11c (143 aa).

This sequence belongs to the universal ribosomal protein uS11 family. As to quaternary structure, part of the 30S ribosomal subunit.

Its subcellular location is the plastid. It localises to the chloroplast. The polypeptide is Small ribosomal subunit protein uS11c (Zea mays (Maize)).